The chain runs to 400 residues: Endophilin-B2 (400 aa).

N-acetylmethionine is present on M1. Positions 1–27 (MDFNMKKLASDAGIFFTRAVQFTEEKF) are membrane-binding amphipathic helix. Phosphoserine is present on S10. The BAR domain maps to 24–287 (EEKFGQAEKT…LGSSQGAIFP (264 aa)). A coiled-coil region spans residues 205 to 234 (SASALWNDEVDKAEQELRVAQTEFDRQAEV). In terms of domain architecture, SH3 spans 340–400 (SGTRKARVLY…VPVTYLELLS (61 aa)). At S400 the chain carries Phosphoserine.

Belongs to the endophilin family. Homodimer, and heterodimer with SH3GLB1.

Its subcellular location is the cytoplasm. The protein is Endophilin-B2 (Sh3glb2) of Mus musculus (Mouse).